The sequence spans 462 residues: Myb-like transcriptional regulator mfmK (462 aa).

HTH myb-type domains lie at 1-54, 56-110, and 113-162; these read MARL…WWNS, ADGT…DPGI, and CDWT…LKHE. DNA-binding regions (H-T-H motif) lie at residues 32-52, 83-106, and 134-158; these read WRDLAKSVPGRSNKDCRRRWW, WSRVSRAIRSRNPDQCSSHWSQVL, and WATIAASHVPPRTRLALKNRYSTLR. The span at 159–175 shows a compositional bias: basic and acidic residues; it reads LKHENESKRESTIRKSV. Disordered stretches follow at residues 159-184, 216-262, and 374-408; these read LKHENESKRESTIRKSVETPPSNFEP, DEEE…VDNG, and STTTGMDSSSAPGSRDTPPSMHFGTSASTTPRTSI. A compositionally biased stretch (acidic residues) spans 216 to 235; that stretch reads DEEEDDDDDDEDNEEDDGDD. Polar residues-rich tracts occupy residues 374 to 385 and 396 to 408; these read STTTGMDSSSAP and FGTSASTTPRTSI.

Its subcellular location is the nucleus. Myb-like transcriptional regulator; part of the gene cluster that mediates the biosynthesis of the phthalide-terpenoid hybrid 11'-O-desmethylfendlerol. This chain is Myb-like transcriptional regulator mfmK, found in Annulohypoxylon moriforme (Filamentous fungus).